Reading from the N-terminus, the 447-residue chain is Argininosuccinate lyase (447 aa).

Belongs to the lyase 1 family. Argininosuccinate lyase subfamily.

It is found in the cytoplasm. It carries out the reaction 2-(N(omega)-L-arginino)succinate = fumarate + L-arginine. It functions in the pathway amino-acid biosynthesis; L-arginine biosynthesis; L-arginine from L-ornithine and carbamoyl phosphate: step 3/3. The sequence is that of Argininosuccinate lyase from Sulfolobus acidocaldarius (strain ATCC 33909 / DSM 639 / JCM 8929 / NBRC 15157 / NCIMB 11770).